The chain runs to 148 residues: Glutamyl-tRNA(Gln) amidotransferase subunit C, mitochondrial (148 aa).

The protein belongs to the GatC family. As to quaternary structure, subunit of the heterotrimeric GatCAB amidotransferase (AdT) complex, composed of A, B and C subunits.

The protein resides in the mitochondrion. It carries out the reaction L-glutamyl-tRNA(Gln) + L-glutamine + ATP + H2O = L-glutaminyl-tRNA(Gln) + L-glutamate + ADP + phosphate + H(+). Allows the formation of correctly charged Gln-tRNA(Gln) through the transamidation of misacylated Glu-tRNA(Gln) in the mitochondria. The reaction takes place in the presence of glutamine and ATP through an activated gamma-phospho-Glu-tRNA(Gln). In Drosophila melanogaster (Fruit fly), this protein is Glutamyl-tRNA(Gln) amidotransferase subunit C, mitochondrial.